We begin with the raw amino-acid sequence, 305 residues long: DNA-directed RNA polymerase 35 kDa subunit (305 aa).

The protein belongs to the poxviridae DNA-directed RNA polymerase 35 kDa subunit family. In terms of assembly, the DNA-dependent RNA polymerase used for intermediate and late genes expression consists of eight subunits 147 kDa, 133 kDa, 35 kDa, 30 kDa, 22 kDa, 19 kDa, 18 kDa and 7 kDa totalling more than 500 kDa in mass. The same holoenzyme, with the addition of the transcription-specificity factor RAP94, is used for early gene expression.

It is found in the virion. The catalysed reaction is RNA(n) + a ribonucleoside 5'-triphosphate = RNA(n+1) + diphosphate. Functionally, part of the DNA-dependent RNA polymerase which catalyzes the transcription of viral DNA into RNA using the four ribonucleoside triphosphates as substrates. Responsible for the transcription of early, intermediate and late genes. DNA-dependent RNA polymerase associates with the early transcription factor (ETF), itself composed of D6 and A7, thereby allowing the early genes transcription. Late transcription, and probably also intermediate transcription, require newly synthesized RNA polymerase. The polypeptide is DNA-directed RNA polymerase 35 kDa subunit (OPG156) (Variola virus (isolate Human/India/Ind3/1967) (VARV)).